Here is a 285-residue protein sequence, read N- to C-terminus: Elongation factor Ts (285 aa).

An involved in Mg(2+) ion dislocation from EF-Tu region spans residues 75 to 78 (TDFV).

It belongs to the EF-Ts family.

It localises to the cytoplasm. In terms of biological role, associates with the EF-Tu.GDP complex and induces the exchange of GDP to GTP. It remains bound to the aminoacyl-tRNA.EF-Tu.GTP complex up to the GTP hydrolysis stage on the ribosome. This chain is Elongation factor Ts, found in Alcanivorax borkumensis (strain ATCC 700651 / DSM 11573 / NCIMB 13689 / SK2).